We begin with the raw amino-acid sequence, 342 residues long: MKIAIIRLSALGDIIQSAVVLQFIKKFKKDIEIHWFVDEKFEGILKNHPLIDKLYALPLKDKKIIQSLRILLEARKNNYNAVMDLQGLVKSAIVSRILSRNNFGFDKNSLKESFAHNFYNQKLNIDYNENVFVRYLGLTSFMLNKYFDPKDLAFKEDVFSVDEKLKQLLSEKMQLTKNKKNILIHVGSSEENKIYPKTKLALLCKLIIKEFPEIKIFLGWGNLKEYEFAKEVIELGAISQDNIEIAPKFSLEELIVFAKSMDLIIGNDSGPTHLAFALNRPSITIFGATPSYRNAFKTNINKIIDTGKKITNTKHLDKSDFCISTIEEEDILKLVKELFGDE.

Residues Ser-188, Ser-189, Lys-193, Glu-225, Asp-268, Ser-269, Gly-270, and His-273 each contribute to the ADP-L-glycero-beta-D-manno-heptose site.

This sequence belongs to the glycosyltransferase 9 family.

The protein localises to the cell inner membrane. It catalyses the reaction an alpha-Kdo-(2-&gt;4)-alpha-Kdo-(2-&gt;6)-lipid A + ADP-L-glycero-beta-D-manno-heptose = an L-alpha-D-Hep-(1-&gt;5)-[alpha-Kdo-(2-&gt;4)]-alpha-Kdo-(2-&gt;6)-lipid A + ADP + H(+). Its pathway is bacterial outer membrane biogenesis; LPS core biosynthesis. In terms of biological role, glycosyltransferase involved in the biosynthesis of the core oligosaccharide region of lipopolysaccharide (LPS). Catalyzes the addition of the first heptose unit to one 3-deoxy-D-manno-octulosonic acid (Kdo) residue of the Kdo2-lipid A module. The sequence is that of Lipopolysaccharide heptosyltransferase 1 from Campylobacter coli.